A 63-amino-acid polypeptide reads, in one-letter code: Large ribosomal subunit protein uL30 (63 aa).

The protein belongs to the universal ribosomal protein uL30 family. Part of the 50S ribosomal subunit.

This is Large ribosomal subunit protein uL30 from Natranaerobius thermophilus (strain ATCC BAA-1301 / DSM 18059 / JW/NM-WN-LF).